A 426-amino-acid chain; its full sequence is Alpha/beta hydrolase pydG (426 aa).

The protein belongs to the AB hydrolase superfamily. As to quaternary structure, homodimer.

Its pathway is mycotoxin biosynthesis. In terms of biological role, alpha/beta hydrolasee; part of the gene cluster that mediates the biosynthesis of pyrrocidines, fungal natural products containing a macrocyclic para-cyclophane connected to a decahydrofluorene ring system that show potent antibiotic activities toward Gram-negative bacteria. Within the pathway, pydG catalyzes the Knoevenagel condensation that affords the 3-pyrrolin-2-one ring, using as substrate the polyketide-tyrosyl acyl thioester product of pydA. The pathway begins with the PKS-NRPS pydA which, with the help of the trans-enoyl reductase pydC, synthesizes the polyketide-tyrosyl acyl thioester product which can be reductively off-loaded by the terminal reductase (R) domain in pydA. The alpha/beta hydrolase pydG is then required to catalyze the subsequent Knoevenagel condensation that affords the 3-pyrrolin-2-one ring, whereas the four proteins pydB, pydE, pydX and pydZ then function synergistically to form the cyclophane. PydB and the membrane-bound pydX and pydZ are lipid-binding proteins that can sequester and mold the pdyG product into the inverse S-shape. Binding of the medium chain reductase pydE to the complex would trigger the cascade oxidative cyclization. PydY is involved in the Diels-Alder cycloaddition that forms the decahydrofluorene core. Additional non-enzymatic hydroxylation yields pyrrocidine A2 which can be further reduced into pyrrocidine B by an endogenous reductase. This chain is Alpha/beta hydrolase pydG, found in Acremonium sp.